Consider the following 345-residue polypeptide: Holliday junction branch migration complex subunit RuvB (345 aa).

The segment at 1–22 (MIETDALSGGTPRRLVTQQPLS) is disordered. A large ATPase domain (RuvB-L) region spans residues 4-193 (TDALSGGTPR…FGIVARLEFY (190 aa)). ATP contacts are provided by residues L32, R33, G74, K77, T78, T79, 140 to 142 (EDY), R183, Y193, and R230. T78 is a Mg(2+) binding site. The interval 194 to 264 (TPEELTRIVR…VADAALSMLD (71 aa)) is small ATPAse domain (RuvB-S). The head domain (RuvB-H) stretch occupies residues 267–345 (PAGLDVMDRK…HFGFVPPERV (79 aa)). DNA is bound by residues R322 and R327.

This sequence belongs to the RuvB family. Homohexamer. Forms an RuvA(8)-RuvB(12)-Holliday junction (HJ) complex. HJ DNA is sandwiched between 2 RuvA tetramers; dsDNA enters through RuvA and exits via RuvB. An RuvB hexamer assembles on each DNA strand where it exits the tetramer. Each RuvB hexamer is contacted by two RuvA subunits (via domain III) on 2 adjacent RuvB subunits; this complex drives branch migration. In the full resolvosome a probable DNA-RuvA(4)-RuvB(12)-RuvC(2) complex forms which resolves the HJ.

It localises to the cytoplasm. It catalyses the reaction ATP + H2O = ADP + phosphate + H(+). The RuvA-RuvB-RuvC complex processes Holliday junction (HJ) DNA during genetic recombination and DNA repair, while the RuvA-RuvB complex plays an important role in the rescue of blocked DNA replication forks via replication fork reversal (RFR). RuvA specifically binds to HJ cruciform DNA, conferring on it an open structure. The RuvB hexamer acts as an ATP-dependent pump, pulling dsDNA into and through the RuvAB complex. RuvB forms 2 homohexamers on either side of HJ DNA bound by 1 or 2 RuvA tetramers; 4 subunits per hexamer contact DNA at a time. Coordinated motions by a converter formed by DNA-disengaged RuvB subunits stimulates ATP hydrolysis and nucleotide exchange. Immobilization of the converter enables RuvB to convert the ATP-contained energy into a lever motion, pulling 2 nucleotides of DNA out of the RuvA tetramer per ATP hydrolyzed, thus driving DNA branch migration. The RuvB motors rotate together with the DNA substrate, which together with the progressing nucleotide cycle form the mechanistic basis for DNA recombination by continuous HJ branch migration. Branch migration allows RuvC to scan DNA until it finds its consensus sequence, where it cleaves and resolves cruciform DNA. The protein is Holliday junction branch migration complex subunit RuvB of Laribacter hongkongensis (strain HLHK9).